Here is a 513-residue protein sequence, read N- to C-terminus: Bifunctional pantoate ligase/cytidylate kinase (513 aa).

The segment at 1–283 (MVQVFRTIAG…VGSTRLIDNL (283 aa)) is pantoate--beta-alanine ligase. Position 30-37 (30-37 (MGSLHAGH)) interacts with ATP. The active-site Proton donor is the His37. (R)-pantoate is bound at residue Gln61. Residue Gln61 coordinates beta-alanine. 150-153 (GAKD) contributes to the ATP binding site. Position 156 (Gln156) interacts with (R)-pantoate. Residues Val179 and 187–190 (MSSR) each bind ATP. The segment at 284–513 (VLNHRLPIIA…IELYKKYNKG (230 aa)) is cytidylate kinase.

It in the N-terminal section; belongs to the pantothenate synthetase family. In the C-terminal section; belongs to the cytidylate kinase family. Type 1 subfamily.

It is found in the cytoplasm. It catalyses the reaction (R)-pantoate + beta-alanine + ATP = (R)-pantothenate + AMP + diphosphate + H(+). The enzyme catalyses CMP + ATP = CDP + ADP. The catalysed reaction is dCMP + ATP = dCDP + ADP. The protein operates within cofactor biosynthesis; (R)-pantothenate biosynthesis; (R)-pantothenate from (R)-pantoate and beta-alanine: step 1/1. Functionally, catalyzes the condensation of pantoate with beta-alanine in an ATP-dependent reaction via a pantoyl-adenylate intermediate. Its function is as follows. Catalyzes the transfer of a phosphate group from ATP to either CMP or dCMP to form CDP or dCDP and ADP, respectively. The chain is Bifunctional pantoate ligase/cytidylate kinase from Synechocystis sp. (strain ATCC 27184 / PCC 6803 / Kazusa).